The primary structure comprises 770 residues: Elongation factor G, mitochondrial (770 aa).

A mitochondrion-targeting transit peptide spans 1–24 (MLKLSFRSLTSRLPRLSTLVVRGY). Positions 57 to 353 (KQIRNIGISA…AVCDYLPNPS (297 aa)) constitute a tr-type G domain. GTP contacts are provided by residues 66-73 (AHIDSGKT), 151-155 (DTPGH), and 205-208 (NKMD).

It belongs to the TRAFAC class translation factor GTPase superfamily. Classic translation factor GTPase family. EF-G/EF-2 subfamily.

It localises to the mitochondrion. It functions in the pathway protein biosynthesis; polypeptide chain elongation. In terms of biological role, mitochondrial GTPase that catalyzes the GTP-dependent ribosomal translocation step during translation elongation. During this step, the ribosome changes from the pre-translocational (PRE) to the post-translocational (POST) state as the newly formed A-site-bound peptidyl-tRNA and P-site-bound deacylated tRNA move to the P and E sites, respectively. Catalyzes the coordinated movement of the two tRNA molecules, the mRNA and conformational changes in the ribosome. This Schizosaccharomyces pombe (strain 972 / ATCC 24843) (Fission yeast) protein is Elongation factor G, mitochondrial (mef1).